Reading from the N-terminus, the 311-residue chain is Lipoyl synthase (311 aa).

[4Fe-4S] cluster contacts are provided by cysteine 47, cysteine 52, cysteine 58, cysteine 73, cysteine 77, cysteine 80, and serine 286. Residues tryptophan 59 to phenylalanine 276 form the Radical SAM core domain.

The protein belongs to the radical SAM superfamily. Lipoyl synthase family. [4Fe-4S] cluster serves as cofactor.

It is found in the cytoplasm. The enzyme catalyses [[Fe-S] cluster scaffold protein carrying a second [4Fe-4S](2+) cluster] + N(6)-octanoyl-L-lysyl-[protein] + 2 oxidized [2Fe-2S]-[ferredoxin] + 2 S-adenosyl-L-methionine + 4 H(+) = [[Fe-S] cluster scaffold protein] + N(6)-[(R)-dihydrolipoyl]-L-lysyl-[protein] + 4 Fe(3+) + 2 hydrogen sulfide + 2 5'-deoxyadenosine + 2 L-methionine + 2 reduced [2Fe-2S]-[ferredoxin]. It participates in protein modification; protein lipoylation via endogenous pathway; protein N(6)-(lipoyl)lysine from octanoyl-[acyl-carrier-protein]: step 2/2. In terms of biological role, catalyzes the radical-mediated insertion of two sulfur atoms into the C-6 and C-8 positions of the octanoyl moiety bound to the lipoyl domains of lipoate-dependent enzymes, thereby converting the octanoylated domains into lipoylated derivatives. The protein is Lipoyl synthase of Chlamydia trachomatis serovar D (strain ATCC VR-885 / DSM 19411 / UW-3/Cx).